Here is a 232-residue protein sequence, read N- to C-terminus: 5'-methylthioadenosine/S-adenosylhomocysteine nucleosidase (232 aa).

Glu12 serves as the catalytic Proton acceptor. Substrate contacts are provided by residues Gly78, Ile152, and 173–174 (ME). The active-site Proton donor is Asp197.

The protein belongs to the PNP/UDP phosphorylase family. MtnN subfamily. As to quaternary structure, homodimer.

The catalysed reaction is S-adenosyl-L-homocysteine + H2O = S-(5-deoxy-D-ribos-5-yl)-L-homocysteine + adenine. It catalyses the reaction S-methyl-5'-thioadenosine + H2O = 5-(methylsulfanyl)-D-ribose + adenine. It carries out the reaction 5'-deoxyadenosine + H2O = 5-deoxy-D-ribose + adenine. It functions in the pathway amino-acid biosynthesis; L-methionine biosynthesis via salvage pathway; S-methyl-5-thio-alpha-D-ribose 1-phosphate from S-methyl-5'-thioadenosine (hydrolase route): step 1/2. Catalyzes the irreversible cleavage of the glycosidic bond in both 5'-methylthioadenosine (MTA) and S-adenosylhomocysteine (SAH/AdoHcy) to adenine and the corresponding thioribose, 5'-methylthioribose and S-ribosylhomocysteine, respectively. Also cleaves 5'-deoxyadenosine, a toxic by-product of radical S-adenosylmethionine (SAM) enzymes, into 5-deoxyribose and adenine. Thus, is required for in vivo function of the radical SAM enzymes biotin synthase and lipoic acid synthase, that are inhibited by 5'-deoxyadenosine accumulation. The polypeptide is 5'-methylthioadenosine/S-adenosylhomocysteine nucleosidase (Salmonella arizonae (strain ATCC BAA-731 / CDC346-86 / RSK2980)).